The following is a 487-amino-acid chain: MSTHYIAGQWRPGQGAPLQSLDPVSQAVVWQGQGASAAQVDEAVNAARGAFSLWAAHSLDGRIAVLERFAAALKSHADELARAIGEETGKPLWEAATEVTSMVNKVAISIQSYRERTGEKSGPLADATAVLRHKPHGVVAVFGPYNFPGHLPNGHIVPALLAGNCVLFKPSELTPKVAELTVKCWIEAGLPAGVLNLLQGGRETGVALAGHPGIDGLFFTGSSRTGNLLHAQFAGRPDKILALEMGGNNPLIVDQVADIDAAVYTIVQSAFISAGQRCTCARRLLVPQGQWGDALLARLVQVAGQLKVGRFDEQPAPFMGSVISLQAAAQLMQAQADLLAKGATALLAMTQPQADAALLTPGILDVTAVSERPDEEFFGPLLQVIRYSDFDGAIAEANTTAFGLAAGLLSDSKARYEQFWLHSRAGIVNWNKQLTGAASTAPFGGIGASGNHRASAYYAADYCAYPVASLESEALTLPTTLTPGVTL.

Position 221–226 (221–226) interacts with NAD(+); sequence GSSRTG. Catalysis depends on residues Glu-244 and Cys-278.

Belongs to the aldehyde dehydrogenase family. AstD subfamily.

The catalysed reaction is N-succinyl-L-glutamate 5-semialdehyde + NAD(+) + H2O = N-succinyl-L-glutamate + NADH + 2 H(+). It participates in amino-acid degradation; L-arginine degradation via AST pathway; L-glutamate and succinate from L-arginine: step 4/5. Its function is as follows. Catalyzes the NAD-dependent reduction of succinylglutamate semialdehyde into succinylglutamate. This is N-succinylglutamate 5-semialdehyde dehydrogenase from Ectopseudomonas mendocina (strain ymp) (Pseudomonas mendocina).